Consider the following 209-residue polypeptide: Protein GrpE (209 aa).

Basic and acidic residues-rich tracts occupy residues 1–16 (MKKS…KEES) and 34–44 (KAGEKTAEPEK). Positions 1–61 (MKKSTKKEST…EKSPEAACRE (61 aa)) are disordered.

Belongs to the GrpE family. As to quaternary structure, homodimer.

It localises to the cytoplasm. Participates actively in the response to hyperosmotic and heat shock by preventing the aggregation of stress-denatured proteins, in association with DnaK and GrpE. It is the nucleotide exchange factor for DnaK and may function as a thermosensor. Unfolded proteins bind initially to DnaJ; upon interaction with the DnaJ-bound protein, DnaK hydrolyzes its bound ATP, resulting in the formation of a stable complex. GrpE releases ADP from DnaK; ATP binding to DnaK triggers the release of the substrate protein, thus completing the reaction cycle. Several rounds of ATP-dependent interactions between DnaJ, DnaK and GrpE are required for fully efficient folding. In Methanosarcina acetivorans (strain ATCC 35395 / DSM 2834 / JCM 12185 / C2A), this protein is Protein GrpE.